The sequence spans 167 residues: Peptide deformylase (167 aa).

Cysteine 91 and histidine 133 together coordinate Fe cation. Glutamate 134 is an active-site residue. Histidine 137 serves as a coordination point for Fe cation.

This sequence belongs to the polypeptide deformylase family. Requires Fe(2+) as cofactor.

It carries out the reaction N-terminal N-formyl-L-methionyl-[peptide] + H2O = N-terminal L-methionyl-[peptide] + formate. Functionally, removes the formyl group from the N-terminal Met of newly synthesized proteins. Requires at least a dipeptide for an efficient rate of reaction. N-terminal L-methionine is a prerequisite for activity but the enzyme has broad specificity at other positions. In Baumannia cicadellinicola subsp. Homalodisca coagulata, this protein is Peptide deformylase.